Here is a 342-residue protein sequence, read N- to C-terminus: Protein pelota homolog (342 aa).

It belongs to the eukaryotic release factor 1 family. Pelota subfamily. In terms of assembly, monomer. It depends on a divalent metal cation as a cofactor.

Its subcellular location is the cytoplasm. May function in recognizing stalled ribosomes, interact with stem-loop structures in stalled mRNA molecules, and effect endonucleolytic cleavage of the mRNA. May play a role in the release non-functional ribosomes and degradation of damaged mRNAs. Has endoribonuclease activity. The sequence is that of Protein pelota homolog from Methanocorpusculum labreanum (strain ATCC 43576 / DSM 4855 / Z).